A 137-amino-acid chain; its full sequence is Lysozyme (137 aa).

The N-terminal stretch at 1 to 18 (MQKLIIFALVVLCVGSEA) is a signal peptide. In terms of domain architecture, C-type lysozyme spans 19 to 137 (KTFTRCGLVH…QGSLPDISSC (119 aa)). 4 disulfides stabilise this stretch: cysteine 24–cysteine 137, cysteine 45–cysteine 127, cysteine 79–cysteine 93, and cysteine 89–cysteine 107. Residues glutamate 50 and aspartate 67 contribute to the active site.

This sequence belongs to the glycosyl hydrolase 22 family.

It carries out the reaction Hydrolysis of (1-&gt;4)-beta-linkages between N-acetylmuramic acid and N-acetyl-D-glucosamine residues in a peptidoglycan and between N-acetyl-D-glucosamine residues in chitodextrins.. Lysozymes have primarily a bacteriolytic function; those in tissues and body fluids are associated with the monocyte-macrophage system and enhance the activity of immunoagents. Active against E.coli and M.luteus. This chain is Lysozyme, found in Bombyx mori (Silk moth).